The chain runs to 160 residues: Zinc finger A20 and AN1 domain-containing stress-associated protein 6 (160 aa).

The A20-type zinc finger occupies 18 to 52; it reads PEAPILCVNNCGFFGSRMTENMCSKCYRDTVKAKT. The Zn(2+) site is built by cysteine 24, cysteine 28, cysteine 40, and cysteine 43. The disordered stretch occupies residues 73 to 94; that stretch reads EVTDGGSGSVADGKQVMEEDTP. An AN1-type zinc finger spans residues 95-141; the sequence is KPPSNRCLSCRKKVGLTGFKCRCGGTFCSMHRYADSHKCTFDYKQVG. Cysteine 101, cysteine 104, cysteine 115, cysteine 117, cysteine 122, histidine 125, histidine 131, and cysteine 133 together coordinate Zn(2+).

Its function is as follows. May be involved in environmental stress response. This chain is Zinc finger A20 and AN1 domain-containing stress-associated protein 6 (SAP6), found in Oryza sativa subsp. japonica (Rice).